The primary structure comprises 82 residues: Small ribosomal subunit protein uS17 (82 aa).

It belongs to the universal ribosomal protein uS17 family. As to quaternary structure, part of the 30S ribosomal subunit.

In terms of biological role, one of the primary rRNA binding proteins, it binds specifically to the 5'-end of 16S ribosomal RNA. The sequence is that of Small ribosomal subunit protein uS17 from Shewanella frigidimarina (strain NCIMB 400).